Consider the following 413-residue polypeptide: Argininosuccinate synthase (413 aa).

8 to 16 contacts ATP; that stretch reads AYSGGLDTS. Position 87 (tyrosine 87) interacts with L-citrulline. Position 117 (glycine 117) interacts with ATP. Residues threonine 119, asparagine 123, and aspartate 124 each coordinate L-aspartate. Asparagine 123 is a binding site for L-citrulline. Residues arginine 127, serine 175, glutamate 259, and tyrosine 271 each contribute to the L-citrulline site.

The protein belongs to the argininosuccinate synthase family. Type 1 subfamily. Homotetramer.

It localises to the cytoplasm. The enzyme catalyses L-citrulline + L-aspartate + ATP = 2-(N(omega)-L-arginino)succinate + AMP + diphosphate + H(+). Its pathway is amino-acid biosynthesis; L-arginine biosynthesis; L-arginine from L-ornithine and carbamoyl phosphate: step 2/3. This is Argininosuccinate synthase from Micrococcus luteus (strain ATCC 4698 / DSM 20030 / JCM 1464 / CCM 169 / CCUG 5858 / IAM 1056 / NBRC 3333 / NCIMB 9278 / NCTC 2665 / VKM Ac-2230) (Micrococcus lysodeikticus).